Consider the following 270-residue polypeptide: Putative pyruvate, phosphate dikinase regulatory protein (270 aa).

148 to 155 (GISRTSKT) contacts ADP.

Belongs to the pyruvate, phosphate/water dikinase regulatory protein family. PDRP subfamily.

It catalyses the reaction N(tele)-phospho-L-histidyl/L-threonyl-[pyruvate, phosphate dikinase] + ADP = N(tele)-phospho-L-histidyl/O-phospho-L-threonyl-[pyruvate, phosphate dikinase] + AMP + H(+). It carries out the reaction N(tele)-phospho-L-histidyl/O-phospho-L-threonyl-[pyruvate, phosphate dikinase] + phosphate + H(+) = N(tele)-phospho-L-histidyl/L-threonyl-[pyruvate, phosphate dikinase] + diphosphate. Bifunctional serine/threonine kinase and phosphorylase involved in the regulation of the pyruvate, phosphate dikinase (PPDK) by catalyzing its phosphorylation/dephosphorylation. This Bacillus cereus (strain AH187) protein is Putative pyruvate, phosphate dikinase regulatory protein.